Consider the following 180-residue polypeptide: Endoribonuclease YbeY (180 aa).

3 residues coordinate Zn(2+): histidine 118, histidine 122, and histidine 128.

This sequence belongs to the endoribonuclease YbeY family. Zn(2+) serves as cofactor.

The protein localises to the cytoplasm. Its function is as follows. Single strand-specific metallo-endoribonuclease involved in late-stage 70S ribosome quality control and in maturation of the 3' terminus of the 16S rRNA. This is Endoribonuclease YbeY from Rhodococcus jostii (strain RHA1).